The following is a 521-amino-acid chain: Importin subunit alpha-4 (521 aa).

The interval 1–29 is disordered; sequence MAENPGLENHRIKSFKNKGRDVETMRRHR. The residue at position 2 (A2) is an N-acetylalanine. In terms of domain architecture, IBB spans 2-58; it reads AENPGLENHRIKSFKNKGRDVETMRRHRNEVTVELRKNKRDEHLLKKRNVPQEESLE. Residues 18–29 show a composition bias toward basic and acidic residues; that stretch reads KGRDVETMRRHR. Positions 43–52 match the Nuclear localization signal motif; the sequence is EHLLKKRNVP. Residues S56 and S60 each carry the phosphoserine modification. An ARM 1; truncated repeat occupies 66–106; sequence FKAQNVTLEAILQNATSDNPVVQLSAVQAARKLLSSDRNPP. 8 ARM repeats span residues 107–149, 150–194, 195–233, 234–278, 279–318, 319–360, 361–400, and 401–443; these read IDDL…TSAQ, TQAV…CRDY, VISL…NKDP, PPPM…EQIQ, MVID…TDEQ, TQVV…NQQQ, VQAV…ISGR, and KDQV…IMAG. Residues 137 to 229 form an NLS binding site (major) region; the sequence is WALTNIASGT…VTWVIVNLCR (93 aa). An NLS binding site (minor) region spans residues 306–394; sequence RAVGNIVTGT…QKEAAWAISN (89 aa). Residues 447–485 form an ARM 10; atypical repeat; the sequence is STIAEIIEECGGLEKIEVLQQHENEDIYKLAFEIIDQYF. At Y484 the chain carries Phosphotyrosine.

The protein belongs to the importin alpha family. In terms of assembly, forms a complex with importin subunit beta-1. Interacts with DDX21. Interacts with NCBP1, NCBP2/CBP20 and NCBP3. Interacts with RCC1. Interacts with ZC3H11A. Detected more or less in all tissues examined (Ehrlich ascites tumor cells, testis, kidney, spleen, liver, heart, lung, thymus, skeletal muscle, cerebellum and brain (without cerebellum)).

It localises to the cytoplasm. The protein localises to the nucleus. In terms of biological role, functions in nuclear protein import as an adapter protein for nuclear receptor KPNB1. Binds specifically and directly to substrates containing either a simple or bipartite NLS motif. Docking of the importin/substrate complex to the nuclear pore complex (NPC) is mediated by KPNB1 through binding to nucleoporin FxFG repeats and the complex is subsequently translocated through the pore by an energy requiring, Ran-dependent mechanism. At the nucleoplasmic side of the NPC, Ran binds to importin-beta and the three components separate and importin-alpha and -beta are re-exported from the nucleus to the cytoplasm where GTP hydrolysis releases Ran from importin. The directionality of nuclear import is thought to be conferred by an asymmetric distribution of the GTP- and GDP-bound forms of Ran between the cytoplasm and nucleus. In vitro, mediates the nuclear import of human cytomegalovirus UL84 by recognizing a non-classical NLS. This is Importin subunit alpha-4 (Kpna3) from Mus musculus (Mouse).